A 200-amino-acid polypeptide reads, in one-letter code: Large ribosomal subunit protein uL4 (200 aa).

Positions 45 to 64 (QKTRAEVSGGGIKPWRQKGT) are disordered.

Belongs to the universal ribosomal protein uL4 family. In terms of assembly, part of the 50S ribosomal subunit.

Functionally, one of the primary rRNA binding proteins, this protein initially binds near the 5'-end of the 23S rRNA. It is important during the early stages of 50S assembly. It makes multiple contacts with different domains of the 23S rRNA in the assembled 50S subunit and ribosome. Forms part of the polypeptide exit tunnel. The sequence is that of Large ribosomal subunit protein uL4 from Psychrobacter cryohalolentis (strain ATCC BAA-1226 / DSM 17306 / VKM B-2378 / K5).